Consider the following 434-residue polypeptide: Histidinol dehydrogenase (434 aa).

Residues Y130, Q188, and N211 each contribute to the NAD(+) site. Residues S237, Q259, and H262 each coordinate substrate. Zn(2+) is bound by residues Q259 and H262. Residues E326 and H327 each act as proton acceptor in the active site. Substrate is bound by residues H327, D360, E414, and H419. D360 is a binding site for Zn(2+). Position 419 (H419) interacts with Zn(2+).

Belongs to the histidinol dehydrogenase family. Homodimer. It depends on Zn(2+) as a cofactor.

The catalysed reaction is L-histidinol + 2 NAD(+) + H2O = L-histidine + 2 NADH + 3 H(+). Its pathway is amino-acid biosynthesis; L-histidine biosynthesis; L-histidine from 5-phospho-alpha-D-ribose 1-diphosphate: step 9/9. Its function is as follows. Catalyzes the sequential NAD-dependent oxidations of L-histidinol to L-histidinaldehyde and then to L-histidine. In Salmonella choleraesuis (strain SC-B67), this protein is Histidinol dehydrogenase.